We begin with the raw amino-acid sequence, 255 residues long: 5-oxoprolinase subunit A (255 aa).

This sequence belongs to the LamB/PxpA family. As to quaternary structure, forms a complex composed of PxpA, PxpB and PxpC.

It carries out the reaction 5-oxo-L-proline + ATP + 2 H2O = L-glutamate + ADP + phosphate + H(+). Its function is as follows. Catalyzes the cleavage of 5-oxoproline to form L-glutamate coupled to the hydrolysis of ATP to ADP and inorganic phosphate. The sequence is that of 5-oxoprolinase subunit A from Clostridium kluyveri (strain ATCC 8527 / DSM 555 / NBRC 12016 / NCIMB 10680 / K1).